The following is a 62-amino-acid chain: Photosystem II reaction center protein Z (62 aa).

Transmembrane regions (helical) follow at residues 8–28 (ALISLVLVSFVLVVGVPVAYA) and 41–61 (WLGSGVWIALVLLVGLLNFFV).

This sequence belongs to the PsbZ family. In terms of assembly, PSII is composed of 1 copy each of membrane proteins PsbA, PsbB, PsbC, PsbD, PsbE, PsbF, PsbH, PsbI, PsbJ, PsbK, PsbL, PsbM, PsbT, PsbX, PsbY, PsbZ, Psb30/Ycf12, peripheral proteins PsbO, CyanoQ (PsbQ), PsbU, PsbV and a large number of cofactors. It forms dimeric complexes.

It is found in the cellular thylakoid membrane. Its function is as follows. May control the interaction of photosystem II (PSII) cores with the light-harvesting antenna, regulates electron flow through the 2 photosystem reaction centers. PSII is a light-driven water plastoquinone oxidoreductase, using light energy to abstract electrons from H(2)O, generating a proton gradient subsequently used for ATP formation. The polypeptide is Photosystem II reaction center protein Z (Trichormus variabilis (strain ATCC 29413 / PCC 7937) (Anabaena variabilis)).